We begin with the raw amino-acid sequence, 452 residues long: Probable ECA polymerase (452 aa).

The next 11 helical transmembrane spans lie at 6–26 (FSGL…LTWF), 37–57 (VFFS…TSVL), 63–83 (VGVA…CFYG), 118–138 (VILM…NGFL), 155–175 (GVAL…VYFL), 181–201 (AWLF…MIVG), 207–227 (IIIA…ISLW), 228–248 (MLAA…LKRY), 341–361 (LVVM…GLII), 378–398 (YKAA…IVLA), and 410–430 (VFFL…FWLF).

The protein belongs to the WzyE family. In terms of assembly, probably part of a complex composed of WzxE, WzyE and WzzE.

Its subcellular location is the cell inner membrane. It participates in bacterial outer membrane biogenesis; enterobacterial common antigen biosynthesis. Its function is as follows. Probably involved in the polymerization of enterobacterial common antigen (ECA) trisaccharide repeat units. The sequence is that of Probable ECA polymerase from Salmonella typhi.